We begin with the raw amino-acid sequence, 93 residues long: uncharacterized protein (93 aa).

The disordered stretch occupies residues 73–93 (KWTVSGPVKQDTGKTDPAEKN). The span at 83-93 (DTGKTDPAEKN) shows a compositional bias: basic and acidic residues.

This is an uncharacterized protein from Rhodobacter capsulatus (Rhodopseudomonas capsulata).